We begin with the raw amino-acid sequence, 306 residues long: Choline-binding protein (306 aa).

Residues 1–22 form the signal peptide; it reads MKRKYLKLMIGLALAATLTLSG. Cysteine 23 is lipidated: N-palmitoyl cysteine. The S-diacylglycerol cysteine moiety is linked to residue cysteine 23.

The protein belongs to the OsmX family.

It localises to the cell membrane. Member of a high affinity multicomponent binding-protein-dependent transport system for choline. The protein is Choline-binding protein (opuBC) of Bacillus subtilis (strain 168).